Here is a 357-residue protein sequence, read N- to C-terminus: Glucose-6-phosphatase catalytic subunit 1 (357 aa).

The Lumenal segment spans residues 1–28 (MEKGMDVLHDFGIQSTHYLQVNYQDSQD). Residues 29–49 (WFILVSVIADLRNAFYVLFPI) form a helical membrane-spanning segment. At 50–60 (WFHLREAVGIK) the chain is on the cytoplasmic side. Residues 61–81 (LLWVAVIGDWLNLVFKWILFG) traverse the membrane as a helical segment. Over 82–117 (QRPYWWVMDTDYYSNTSVPLIKQFPVTCETGPGSPS) the chain is Lumenal. Arg-83 serves as a coordination point for substrate. Asn-96 carries an N-linked (GlcNAc...) asparagine glycan. The chain crosses the membrane as a helical span at residues 118-138 (GHAMGTAGVYYVMVTSTLSIF). His-119 serves as the catalytic Proton donor. Residues 139–147 (RGRKRPTYR) lie on the Cytoplasmic side of the membrane. Residues 148 to 168 (FRCLNILLWLGFWAVQLNVCL) form a helical membrane-spanning segment. At 169–170 (SR) the chain is on the lumenal side. A substrate-binding site is contributed by Arg-170. The helical transmembrane segment at 171-191 (IYLAAHFPHQVVAGVLSGIAV) threads the bilayer. Residue His-176 is the Nucleophile of the active site. Topologically, residues 192 to 209 (AETFRHIQSIYNASLKKY) are cytoplasmic. A helical transmembrane segment spans residues 210–230 (FLITFFLFSFAIGFYLLLKGL). Over 231–254 (GVDLLWTLEKARRWCERPEWVHID) the chain is Lumenal. The helical transmembrane segment at 255–275 (TTPFASLLKNVGTLFGLGVTL) threads the bilayer. Residues 276-291 (NSSMYRESCKGKLSKW) are Cytoplasmic-facing. The chain crosses the membrane as a helical span at residues 292–312 (FPFRLSCIVVSLILLHLFDSL). Residues 313–320 (KPPSQTEL) lie on the Lumenal side of the membrane. Residues 321-341 (IFYTLSFCKSAAVPLASVSLI) form a helical membrane-spanning segment. Topologically, residues 342 to 357 (PYCLARVFDQPDKKSL) are cytoplasmic. Residues 354 to 357 (KKSL) carry the Prevents secretion from ER motif.

It belongs to the glucose-6-phosphatase family.

It is found in the endoplasmic reticulum membrane. The enzyme catalyses D-glucose 6-phosphate + H2O = D-glucose + phosphate. It participates in carbohydrate biosynthesis; gluconeogenesis. Functionally, hydrolyzes glucose-6-phosphate to glucose in the endoplasmic reticulum. Forms with the glucose-6-phosphate transporter (SLC37A4/G6PT) the complex responsible for glucose production in the terminal step of glycogenolysis and gluconeogenesis. Hence, it is the key enzyme in homeostatic regulation of blood glucose levels. This Canis lupus familiaris (Dog) protein is Glucose-6-phosphatase catalytic subunit 1 (G6PC1).